The primary structure comprises 397 residues: Putative nickel insertion protein (397 aa).

The protein belongs to the LarC family.

The sequence is that of Putative nickel insertion protein from Synechococcus sp. (strain JA-3-3Ab) (Cyanobacteria bacterium Yellowstone A-Prime).